A 206-amino-acid chain; its full sequence is Thymidylate kinase (206 aa).

An ATP-binding site is contributed by 11-18 (GPEGAGKT).

The protein belongs to the thymidylate kinase family.

It catalyses the reaction dTMP + ATP = dTDP + ADP. Phosphorylation of dTMP to form dTDP in both de novo and salvage pathways of dTTP synthesis. In Deinococcus radiodurans (strain ATCC 13939 / DSM 20539 / JCM 16871 / CCUG 27074 / LMG 4051 / NBRC 15346 / NCIMB 9279 / VKM B-1422 / R1), this protein is Thymidylate kinase (tmk).